A 58-amino-acid polypeptide reads, in one-letter code: Potassium channel toxin alpha-KTx BmKcug1a (58 aa).

The first 21 residues, 1 to 21 (MKISFLLLLAIVICSIGWTEA), serve as a signal peptide directing secretion. Position 22 is a pyrrolidone carboxylic acid (glutamine 22). Disulfide bonds link cysteine 28–cysteine 49, cysteine 34–cysteine 54, and cysteine 38–cysteine 56.

The protein belongs to the short scorpion toxin superfamily. Potassium channel inhibitor family. Alpha-KTx 01 subfamily. Expressed by the venom gland.

The protein resides in the secreted. Its function is as follows. Potent blocker of both large-conductance calcium-activated potassium channels (KCa1.1/KCNMA1) and voltage-gated potassium channels (Kv1.3/KCNA3 and ERG1/Kv11.1/KCNH2). In Olivierus martensii (Manchurian scorpion), this protein is Potassium channel toxin alpha-KTx BmKcug1a.